Here is a 429-residue protein sequence, read N- to C-terminus: Gamma-glutamyl phosphate reductase (429 aa).

The protein belongs to the gamma-glutamyl phosphate reductase family.

The protein resides in the cytoplasm. It carries out the reaction L-glutamate 5-semialdehyde + phosphate + NADP(+) = L-glutamyl 5-phosphate + NADPH + H(+). It participates in amino-acid biosynthesis; L-proline biosynthesis; L-glutamate 5-semialdehyde from L-glutamate: step 2/2. Its function is as follows. Catalyzes the NADPH-dependent reduction of L-glutamate 5-phosphate into L-glutamate 5-semialdehyde and phosphate. The product spontaneously undergoes cyclization to form 1-pyrroline-5-carboxylate. The sequence is that of Gamma-glutamyl phosphate reductase from Rhizorhabdus wittichii (strain DSM 6014 / CCUG 31198 / JCM 15750 / NBRC 105917 / EY 4224 / RW1) (Sphingomonas wittichii).